The sequence spans 593 residues: Phosphoinositide phosphatase SAC6 (593 aa).

In terms of domain architecture, SAC spans 128–456; the sequence is LSVAERTTGL…GDDISIQYSG (329 aa). A Phosphatase catalytic core motif is present at residues 391–402; the sequence is RTNCIDCLDRTN. Helical transmembrane passes span 526-546 and 555-575; these read AVAN…FATM and YKHL…AALV.

In terms of tissue distribution, predominantly expressed in flowers.

It localises to the endoplasmic reticulum membrane. Functionally, phosphoinositide phosphatase that hydrolyzes PtdIns(3)P and PtdIns(4)P. Involved in priming for different defense responses. The polypeptide is Phosphoinositide phosphatase SAC6 (SAC6) (Arabidopsis thaliana (Mouse-ear cress)).